A 260-amino-acid chain; its full sequence is Carbonic anhydrase 2 (260 aa).

N-acetylserine is present on Ser2. A Phosphoserine modification is found at Ser2. The region spanning 3–259 is the Alpha-carbonic anhydrase domain; the sequence is HHWGYSKHNG…LKNRKIKASF (257 aa). The active-site Proton acceptor is His64. Asn67 is a catalytic residue. At Ser87 the chain carries Phosphoserine. 3 residues coordinate Zn(2+): His94, His96, and His119. Residue Tyr127 is part of the active site. Ser165 bears the Phosphoserine mark. 198–199 serves as a coordination point for substrate; it reads TT.

This sequence belongs to the alpha-carbonic anhydrase family. As to quaternary structure, interacts with SLC4A4. Interaction with SLC4A7 regulates SLC4A7 transporter activity. Interacts with SLC26A6. The cofactor is Zn(2+).

The protein resides in the cytoplasm. It localises to the cell membrane. It catalyses the reaction hydrogencarbonate + H(+) = CO2 + H2O. The enzyme catalyses urea = cyanamide + H2O. Its activity is regulated as follows. Inhibited by acetazolamide. Functionally, catalyzes the reversible hydration of carbon dioxide. Can also hydrate cyanamide to urea. Involved in the regulation of fluid secretion into the anterior chamber of the eye. Essential for bone resorption and osteoclast differentiation. Contributes to intracellular pH regulation in the duodenal upper villous epithelium during proton-coupled peptide absorption. Stimulates the chloride-bicarbonate exchange activity of SLC26A6. The sequence is that of Carbonic anhydrase 2 (Ca2) from Mus musculus (Mouse).